A 316-amino-acid polypeptide reads, in one-letter code: tRNA dimethylallyltransferase (316 aa).

Residue 23–30 (GPTASGKS) coordinates ATP. Residue 25 to 30 (TASGKS) coordinates substrate. An interaction with substrate tRNA region spans residues 48–51 (DSMQ).

It belongs to the IPP transferase family. Monomer. The cofactor is Mg(2+).

The enzyme catalyses adenosine(37) in tRNA + dimethylallyl diphosphate = N(6)-dimethylallyladenosine(37) in tRNA + diphosphate. Functionally, catalyzes the transfer of a dimethylallyl group onto the adenine at position 37 in tRNAs that read codons beginning with uridine, leading to the formation of N6-(dimethylallyl)adenosine (i(6)A). The polypeptide is tRNA dimethylallyltransferase (Rhodopseudomonas palustris (strain BisB18)).